A 278-amino-acid polypeptide reads, in one-letter code: Ferredoxin--NADP reductase A (278 aa).

Residues 3 to 103 enclose the FAD-binding FR-type domain; the sequence is PGYTEETVLE…KRATGTLTIG (101 aa). Residues 52–55 and Thr-118 contribute to the FAD site; that span reads RAYS.

Belongs to the ferredoxin--NADP reductase type 1 family. It depends on FAD as a cofactor.

The catalysed reaction is 2 reduced [4Fe-4S]-[ferredoxin] + NADP(+) + H(+) = 2 oxidized [4Fe-4S]-[ferredoxin] + NADPH. Functionally, transports electrons between NADPH and ferredoxin. Can transfer electrons to ferredoxins Fdx2 and Fdx8. Prefers NADPH to NADH. The chain is Ferredoxin--NADP reductase A from Sorangium cellulosum (strain So ce56) (Polyangium cellulosum (strain So ce56)).